A 515-amino-acid chain; its full sequence is 2,3-bisphosphoglycerate-independent phosphoglycerate mutase (515 aa).

Residues Asp17 and Ser67 each contribute to the Mn(2+) site. The active-site Phosphoserine intermediate is Ser67. Residues His128, 157-158 (RD), Arg190, Arg196, 262-265 (RADR), and Lys336 each bind substrate. Residues Asp403, His407, Asp444, His445, and His463 each contribute to the Mn(2+) site.

It belongs to the BPG-independent phosphoglycerate mutase family. As to quaternary structure, monomer. The cofactor is Mn(2+).

It catalyses the reaction (2R)-2-phosphoglycerate = (2R)-3-phosphoglycerate. It functions in the pathway carbohydrate degradation; glycolysis; pyruvate from D-glyceraldehyde 3-phosphate: step 3/5. Its function is as follows. Catalyzes the interconversion of 2-phosphoglycerate and 3-phosphoglycerate. The protein is 2,3-bisphosphoglycerate-independent phosphoglycerate mutase of Acinetobacter baylyi (strain ATCC 33305 / BD413 / ADP1).